The sequence spans 398 residues: S-adenosylmethionine synthase (398 aa).

Residue H15 participates in ATP binding. Residue D17 coordinates Mg(2+). Residue E43 participates in K(+) binding. E56 and Q99 together coordinate L-methionine. The interval 99–109 is flexible loop; sequence QSPDIAQGVDT. ATP contacts are provided by residues 175–177, 243–244, D252, 258–259, A275, and K279; these read DGK, RF, and RK. D252 is an L-methionine binding site. L-methionine is bound at residue K283.

The protein belongs to the AdoMet synthase family. Homotetramer; dimer of dimers. The cofactor is Mg(2+). K(+) is required as a cofactor.

It localises to the cytoplasm. The enzyme catalyses L-methionine + ATP + H2O = S-adenosyl-L-methionine + phosphate + diphosphate. Its pathway is amino-acid biosynthesis; S-adenosyl-L-methionine biosynthesis; S-adenosyl-L-methionine from L-methionine: step 1/1. Its function is as follows. Catalyzes the formation of S-adenosylmethionine (AdoMet) from methionine and ATP. The overall synthetic reaction is composed of two sequential steps, AdoMet formation and the subsequent tripolyphosphate hydrolysis which occurs prior to release of AdoMet from the enzyme. The sequence is that of S-adenosylmethionine synthase from Parafrankia sp. (strain EAN1pec).